A 1115-amino-acid chain; its full sequence is DNA-directed RNA polymerase subunit beta (1115 aa).

The disordered stretch occupies residues 1084 to 1115 (HEAGEGEDDEYFEEDEEAVDDEPMTFDDDDME). A compositionally biased stretch (acidic residues) spans 1088–1115 (EGEDDEYFEEDEEAVDDEPMTFDDDDME).

It belongs to the RNA polymerase beta chain family. In terms of assembly, the RNAP catalytic core consists of 2 alpha, 1 beta, 1 beta' and 1 omega subunit. When a sigma factor is associated with the core the holoenzyme is formed, which can initiate transcription.

The enzyme catalyses RNA(n) + a ribonucleoside 5'-triphosphate = RNA(n+1) + diphosphate. Its function is as follows. DNA-dependent RNA polymerase catalyzes the transcription of DNA into RNA using the four ribonucleoside triphosphates as substrates. The chain is DNA-directed RNA polymerase subunit beta from Desulfitobacterium hafniense (strain Y51).